The sequence spans 1677 residues: Zinc finger protein 831 (1677 aa).

A compositionally biased stretch (pro residues) spans 1 to 26 (MEVPEPTCPAPPARDQPAPTPGPPGA). The interval 1 to 43 (MEVPEPTCPAPPARDQPAPTPGPPGAPGGQASPHLTLGPVLLP) is disordered. 2 consecutive C2H2-type zinc fingers follow at residues 144–166 (YLCP…IRSH) and 172–196 (FPCA…TQTH). Disordered regions lie at residues 193–250 (TQTH…SPGA), 270–398 (GSAF…AGLE), 516–557 (WLEP…PSGH), 663–931 (EAAG…VLSA), 950–1062 (TPLP…TCEA), 1100–1119 (NWEL…SGPL), 1137–1176 (LTRP…PFPS), 1216–1243 (LRDE…GPAQ), 1510–1597 (SAES…GQYG), and 1620–1677 (LITR…VIEI). Basic and acidic residues-rich tracts occupy residues 216 to 232 (EGDK…RGES) and 325 to 341 (KPWD…KCES). The segment covering 376 to 385 (EGGPGPGPGV) has biased composition (gly residues). Residues 391–423 (GAREAGLELEKKRLEERIAQLISHNQAVVDDAQ) are a coiled coil. Basic and acidic residues-rich tracts occupy residues 517–526 (LEPREPRDPW), 674–684 (QDRRTPVHEDI), 707–727 (PTKH…RVEE), and 813–834 (SGED…HSWK). Low complexity-rich tracts occupy residues 880 to 894 (LESS…SVAL) and 905 to 919 (PLHP…HPSL). Residues 1153 to 1170 (SSHSGTSRSHSTRSPHST) are compositionally biased toward low complexity. Residues 1518 to 1531 (QTAGRTLTSSSPDS) are compositionally biased toward polar residues. Positions 1649 to 1662 (RSLEGMRKQTRVEF) are enriched in basic and acidic residues.

The sequence is that of Zinc finger protein 831 (ZNF831) from Homo sapiens (Human).